The following is a 134-amino-acid chain: ATP synthase epsilon chain, chloroplastic (134 aa).

This sequence belongs to the ATPase epsilon chain family. As to quaternary structure, F-type ATPases have 2 components, CF(1) - the catalytic core - and CF(0) - the membrane proton channel. CF(1) has five subunits: alpha(3), beta(3), gamma(1), delta(1), epsilon(1). CF(0) has three main subunits: a, b and c.

Its subcellular location is the plastid. It is found in the chloroplast thylakoid membrane. In terms of biological role, produces ATP from ADP in the presence of a proton gradient across the membrane. In Porphyra purpurea (Red seaweed), this protein is ATP synthase epsilon chain, chloroplastic.